The primary structure comprises 359 residues: Type-1 angiotensin II receptor B (359 aa).

Topologically, residues 1–25 (MTLNSSTEDGIKRIQDDCPKAGRHN) are extracellular. Residue asparagine 4 is glycosylated (N-linked (GlcNAc...) asparagine). The angiotensin II site is built by glutamine 15 and aspartate 17. Cystine bridges form between cysteine 18–cysteine 274 and cysteine 101–cysteine 180. A helical membrane pass occupies residues 26–55 (YIFVMIPTLYSIIFVVGIFGNSLVVIVIYF). Residues 56–61 (YMKLKT) lie on the Cytoplasmic side of the membrane. A helical membrane pass occupies residues 62–89 (VASVFLLNLALADLCFLLTLPLWAVYTA). Topologically, residues 90–98 (MEYRWPFGN) are extracellular. A helical membrane pass occupies residues 99 to 125 (HLCKIASASVSFNLYASVFLLTCLSID). Topologically, residues 126 to 141 (RYLAIVHPMKSRLRRT) are cytoplasmic. The helical transmembrane segment at 142-165 (MLVAKVTCIIIWLMAGLASLPAVI) threads the bilayer. Topologically, residues 166–190 (YRNVYFIENTNITVCAFHYESQNST) are extracellular. Residue arginine 167 participates in angiotensin II binding. N-linked (GlcNAc...) asparagine glycosylation is present at asparagine 176. Angiotensin II contacts are provided by phenylalanine 182, histidine 183, and tyrosine 184. Asparagine 188 carries an N-linked (GlcNAc...) asparagine glycan. Residues 191-216 (LPIGLGLTKNILGFVFPFLIILTSYT) traverse the membrane as a helical segment. Lysine 199 contacts angiotensin II. The Cytoplasmic segment spans residues 217–239 (LIWKALKKAYKIQKNTPRNDDIF). Residues 240 to 268 (RIIMAIVLFFFFSWVPHQIFTFLDVLIQL) form a helical membrane-spanning segment. Over 269–278 (GIIRDCEIAD) the chain is Extracellular. The chain crosses the membrane as a helical span at residues 279 to 304 (IVDTAMPITICIAYFNNCLNPLFYGF). Topologically, residues 305–359 (LGKKFKKYFLQLLKYIPPTAKSHAGLSTKMSTLSYRPSDNMSSSAKKSASFFEVE) are cytoplasmic. The tract at residues 339-359 (YRPSDNMSSSAKKSASFFEVE) is disordered. The segment covering 346–359 (SSSAKKSASFFEVE) has biased composition (low complexity).

The protein belongs to the G-protein coupled receptor 1 family. As to quaternary structure, interacts with MAS1. Interacts with ARRB1. Interacts with FLNA (via filamin repeat 21); increases PKA-mediated phosphorylation of FLNA. In terms of processing, C-terminal Ser or Thr residues may be phosphorylated. Is expressed in the liver, kidney, aorta, lung, uterus, ovary, spleen, heart, and vascular smooth muscle cell. Expressed most abundantly in the adrenal gland.

The protein resides in the cell membrane. Receptor for angiotensin II, a vasoconstricting peptide, which acts as a key regulator of blood pressure and sodium retention by the kidney. The activated receptor in turn couples to G-alpha proteins G(q) (GNAQ, GNA11, GNA14 or GNA15) and thus activates phospholipase C and increases the cytosolic Ca(2+) concentrations, which in turn triggers cellular responses such as stimulation of protein kinase C. The chain is Type-1 angiotensin II receptor B (Agtr1b) from Rattus norvegicus (Rat).